A 130-amino-acid chain; its full sequence is DNA-directed RNA polymerase subunit omega (130 aa).

The disordered stretch occupies residues 109 to 130 (EEELLKGLEGLAPPEEQPEEDE).

It belongs to the RNA polymerase subunit omega family. The RNAP catalytic core consists of 2 alpha, 1 beta, 1 beta' and 1 omega subunit. When a sigma factor is associated with the core the holoenzyme is formed, which can initiate transcription.

It carries out the reaction RNA(n) + a ribonucleoside 5'-triphosphate = RNA(n+1) + diphosphate. Functionally, promotes RNA polymerase assembly. Latches the N- and C-terminal regions of the beta' subunit thereby facilitating its interaction with the beta and alpha subunits. The polypeptide is DNA-directed RNA polymerase subunit omega (Rhodopseudomonas palustris (strain BisA53)).